The following is a 238-amino-acid chain: Endonuclease V (238 aa).

2 residues coordinate Mg(2+): aspartate 46 and aspartate 116.

Belongs to the endonuclease V family. Requires Mg(2+) as cofactor.

It localises to the cytoplasm. It carries out the reaction Endonucleolytic cleavage at apurinic or apyrimidinic sites to products with a 5'-phosphate.. Functionally, DNA repair enzyme involved in the repair of deaminated bases. Selectively cleaves double-stranded DNA at the second phosphodiester bond 3' to a deoxyinosine leaving behind the intact lesion on the nicked DNA. This Bacillus subtilis (strain 168) protein is Endonuclease V.